The primary structure comprises 211 residues: Ribonuclease HII (211 aa).

Residues Ala-16 to Val-205 form the RNase H type-2 domain. A divalent metal cation contacts are provided by Asp-22, Glu-23, and Asp-114.

It belongs to the RNase HII family. Mn(2+) is required as a cofactor. Mg(2+) serves as cofactor.

The protein localises to the cytoplasm. The enzyme catalyses Endonucleolytic cleavage to 5'-phosphomonoester.. Its function is as follows. Endonuclease that specifically degrades the RNA of RNA-DNA hybrids. The sequence is that of Ribonuclease HII (rnhB) from Caulobacter vibrioides (strain ATCC 19089 / CIP 103742 / CB 15) (Caulobacter crescentus).